The chain runs to 141 residues: Hemoglobin subunit alpha-D (141 aa).

The Globin domain occupies 1 to 141 (MLTAEDKKLI…VAAVLAEKYR (141 aa)). Heme b is bound by residues His-58 and His-87.

This sequence belongs to the globin family. As to quaternary structure, heterotetramer of two alpha-D chains and two beta chains. In terms of tissue distribution, red blood cells.

Its function is as follows. Involved in oxygen transport from the lung to the various peripheral tissues. The protein is Hemoglobin subunit alpha-D (HBAD) of Anas platyrhynchos (Mallard).